Reading from the N-terminus, the 349-residue chain is 2-oxoglutarate and iron-dependent oxygenase domain-containing protein 2 (349 aa).

Residues 211–305 (DSHRAFVVKY…RWNLILWMRA (95 aa)) form the Fe2OG dioxygenase domain. Fe cation contacts are provided by histidine 231, aspartate 233, and histidine 286. 2-oxoglutarate is bound at residue arginine 296.

It belongs to the OGFOD2 family. Requires Fe(2+) as cofactor. L-ascorbate serves as cofactor.

In Xenopus tropicalis (Western clawed frog), this protein is 2-oxoglutarate and iron-dependent oxygenase domain-containing protein 2 (ogfod2).